The sequence spans 231 residues: MEKSERPLIKKKRPFRKKKRSFRKRRSPIESGHQIDFTNTSLLNQFISQQGKILPRKVTRLTLKQQRFMTSAIKQARILSLLPFVFDDKKVKKKQKEEFQKKQKEEFQKKQKEEFQKKQKEEFQKKQKEEFQKKQKEEFQKKQFQKKEFQRTKSTARTTNEKQTNEKQTKSTARTTNEKQTKSTARTTNEKQTKSTARTTNEKQTKSTARTTNEKQTKSNDRTTDLRTRKK.

Disordered stretches follow at residues 1-31 and 95-231; these read MEKS…PIES and QKEE…TRKK. Positions 9 to 26 are enriched in basic residues; that stretch reads IKKKRPFRKKKRSFRKRR. Basic and acidic residues-rich tracts occupy residues 95–151, 159–169, and 212–231; these read QKEE…EFQR, TNEKQTNEKQT, and TNEK…TRKK.

This sequence belongs to the bacterial ribosomal protein bS18 family. In terms of assembly, part of the 30S ribosomal subunit.

It is found in the plastid. The protein resides in the chloroplast. The polypeptide is Small ribosomal subunit protein bS18c (Jasminum nudiflorum (Winter jasmine)).